The primary structure comprises 313 residues: 4-hydroxy-3-methylbut-2-enyl diphosphate reductase (313 aa).

Cys-12 is a binding site for [4Fe-4S] cluster. 2 residues coordinate (2E)-4-hydroxy-3-methylbut-2-enyl diphosphate: His-41 and His-74. His-41 and His-74 together coordinate dimethylallyl diphosphate. Isopentenyl diphosphate is bound by residues His-41 and His-74. Cys-96 contacts [4Fe-4S] cluster. His-124 is a (2E)-4-hydroxy-3-methylbut-2-enyl diphosphate binding site. A dimethylallyl diphosphate-binding site is contributed by His-124. His-124 lines the isopentenyl diphosphate pocket. Glu-126 serves as the catalytic Proton donor. Thr-164 lines the (2E)-4-hydroxy-3-methylbut-2-enyl diphosphate pocket. Residue Cys-194 coordinates [4Fe-4S] cluster. Positions 222, 223, 224, and 266 each coordinate (2E)-4-hydroxy-3-methylbut-2-enyl diphosphate. Ser-222, Ser-223, Asn-224, and Ser-266 together coordinate dimethylallyl diphosphate. Residues Ser-222, Ser-223, Asn-224, and Ser-266 each coordinate isopentenyl diphosphate.

Belongs to the IspH family. [4Fe-4S] cluster serves as cofactor.

The enzyme catalyses isopentenyl diphosphate + 2 oxidized [2Fe-2S]-[ferredoxin] + H2O = (2E)-4-hydroxy-3-methylbut-2-enyl diphosphate + 2 reduced [2Fe-2S]-[ferredoxin] + 2 H(+). The catalysed reaction is dimethylallyl diphosphate + 2 oxidized [2Fe-2S]-[ferredoxin] + H2O = (2E)-4-hydroxy-3-methylbut-2-enyl diphosphate + 2 reduced [2Fe-2S]-[ferredoxin] + 2 H(+). It functions in the pathway isoprenoid biosynthesis; dimethylallyl diphosphate biosynthesis; dimethylallyl diphosphate from (2E)-4-hydroxy-3-methylbutenyl diphosphate: step 1/1. Its pathway is isoprenoid biosynthesis; isopentenyl diphosphate biosynthesis via DXP pathway; isopentenyl diphosphate from 1-deoxy-D-xylulose 5-phosphate: step 6/6. Catalyzes the conversion of 1-hydroxy-2-methyl-2-(E)-butenyl 4-diphosphate (HMBPP) into a mixture of isopentenyl diphosphate (IPP) and dimethylallyl diphosphate (DMAPP). Acts in the terminal step of the DOXP/MEP pathway for isoprenoid precursor biosynthesis. The sequence is that of 4-hydroxy-3-methylbut-2-enyl diphosphate reductase from Burkholderia pseudomallei (strain 1026b).